The primary structure comprises 113 residues: Small ribosomal subunit protein bS18 (113 aa).

Positions 1–41 are disordered; the sequence is MSEEKIVNTEAAPEAVAERPARAERSERPERPAKGPFGKKR. Over residues 16-33 the composition is skewed to basic and acidic residues; that stretch reads VAERPARAERSERPERPA.

It belongs to the bacterial ribosomal protein bS18 family. Part of the 30S ribosomal subunit. Forms a tight heterodimer with protein bS6.

Its function is as follows. Binds as a heterodimer with protein bS6 to the central domain of the 16S rRNA, where it helps stabilize the platform of the 30S subunit. The sequence is that of Small ribosomal subunit protein bS18 from Elusimicrobium minutum (strain Pei191).